Consider the following 190-residue polypeptide: B3 domain-containing protein Os02g0764100 (190 aa).

Residues 17–121 (FEKAVTPSDV…KLLFIDCKKN (105 aa)) constitute a DNA-binding region (TF-B3).

It is found in the nucleus. The sequence is that of B3 domain-containing protein Os02g0764100 from Oryza sativa subsp. japonica (Rice).